A 1513-amino-acid polypeptide reads, in one-letter code: DNA-directed RNA polymerase subunit beta'' (1513 aa).

Cys220, Cys296, Cys303, and Cys306 together coordinate Zn(2+). A disordered region spans residues 644–769; that stretch reads RTREKDSENE…EYGNPEEDSV (126 aa). The span at 659-679 shows a compositional bias: basic and acidic residues; it reads NEYRTREEECKTLEDEYRTRE. Acidic residues predominate over residues 680-707; it reads EEYETLEDEYGIPENEYETLEDEYGILE. Over residues 726–737 the composition is skewed to basic and acidic residues; it reads NKYRPREDKYGT. The span at 738 to 767 shows a compositional bias: acidic residues; sequence LEEDSEDEHGTLEEDSEEDSEDEYGNPEED.

This sequence belongs to the RNA polymerase beta' chain family. RpoC2 subfamily. In plastids the minimal PEP RNA polymerase catalytic core is composed of four subunits: alpha, beta, beta', and beta''. When a (nuclear-encoded) sigma factor is associated with the core the holoenzyme is formed, which can initiate transcription. The cofactor is Zn(2+).

It localises to the plastid. The protein resides in the chloroplast. The enzyme catalyses RNA(n) + a ribonucleoside 5'-triphosphate = RNA(n+1) + diphosphate. DNA-dependent RNA polymerase catalyzes the transcription of DNA into RNA using the four ribonucleoside triphosphates as substrates. In Oryza sativa (Rice), this protein is DNA-directed RNA polymerase subunit beta''.